Consider the following 513-residue polypeptide: uncharacterized protein (513 aa).

13 helical membrane passes run 3–23, 47–67, 71–91, 129–149, 153–173, 177–197, 233–253, 273–293, 320–340, 374–394, 395–415, 424–444, and 462–482; these read MTAF…TYFA, LAIA…GMIA, FDGF…LYIV, TFYM…LLGL, AAVL…GMIA, VQII…IIVF, ETLS…HILI, WIIG…AAFV, FLFA…VTGL, ASVA…SLNV, AFLV…LIVF, ASGA…LVSM, and LIPL…GAWL.

This sequence belongs to the sodium:solute symporter (SSF) (TC 2.A.21) family.

It localises to the cell membrane. This is an uncharacterized protein from Bacillus subtilis (strain 168).